The primary structure comprises 1399 residues: MKDLLNLLKNQGQVEEFDAIRIGLASPEMIRSWSFGEVKKPETINYRTFKPERDGLFCAKIFGPVKDYECLCGKYKRLKHRGVICEKCGVEVALAKVRRERMAHIELASPVAHIWFLKSLPSRIGLLMDMTLRDIERVLYFESYVVIDPGMTTLEKGQLLNDEQYFEALEEFGDDFDARMGAEAVRELLHAIDLEHEIGRLREEIPQTNSETKIKKLSKRLKLMEAFQGSGNLPEWMVLTVLPVLPPDLRPLVPLDGGRFATSDLNDLYRRVINRNNRLKRLLDLSAPDIIVRNEKRMLQEAVDALLDNGRRGRAITGSNKRPLKSLADMIKGKQGRFRQNLLGKRVDYSGRSVITVGPTLRLHQCGLPKKMALELFKPFIFGKLEMRGLATTIKAAKKMVERELPEVWDVLAEVIREHPVLLNRAPTLHRLGIQAFEPVLIEGKAIQLHPLVCAAYNADFDGDQMAVHVPLTLEAQLEARALMMSTNNILSPANGEPIIVPSQDVVLGLYYMTREAINAKGEGRVFADLQEVDRVFRAGEAALHAKVKVRIHETVNDRDGGSVKNTRIVDTTVGRALLFQVVPAGLSYDVVNQPMKKKAISKLINQCYRVVGLKETVIFADQLMYTGFAYSTISGVSIGVNDFVIPDEKARIIDAATEEVKEIESQYASGLVTQGEKYNKVIDLWSKANDEVSKAMMSNLSKEKVIDRHGVEVDQESFNSMYMMADSGARGSAAQIRQLAGMRGLMAKPDGSIIETPITANFREGLSVLQYFISTHGARKGLADTALKTANSGYLTRRLVDVAQDLVVTEVDCGTEHGLLMTPHIEGGDVVEPLGERVLGRVIARDVFKPGTEDVIVPAGTLVDEKWVEFIELNSIDEVIVRSPISCETRYGICAKCYGRDLARGHQVNIGEAVGVIAAQSIGEPGTQLTMRTFHIGGAASRTSAADSVQVKNGGTVRLHNLKHVERVDGHLVAVSRSGELAIADDFGRERERYKLPYGAVISVKEGDKVDAGSIVAKWDPHTHPIVTEMKGTVTYVGMEEGITIKRQTDELTGMTNIEVLDAKDRPAAGKDIRPAVKMVGLDGKDLLLPGTDVPAQYFLPANALVGVADGAQIAIGDVIARIPQETSKTRDITGGLPRVADLFEARRPKEASILAEVSGTIAFGKETKGKRRLVITPNDGSDPYEELIPKWRHLNVFEGEQVNRGEVISDGPSDPHDILRLLGVSALAKYIVNEIQDVYRLQGVKINDKHIETILRQMLRKVEIAESGDSSFIKGDQMELTHVLVENERLSTEDKFVSKFTRVLLGITKASLSTESFISAASFQETTRVLTEAAVTGKRDYLRGLKENVVVGRLIPAGTGLAYHSERKRRREMDKPTRVSASEVEAALTEALNSSGN.

Positions 70, 72, 85, and 88 each coordinate Zn(2+). Asp-460, Asp-462, and Asp-464 together coordinate Mg(2+). Zn(2+) contacts are provided by Cys-814, Cys-888, Cys-895, and Cys-898.

The protein belongs to the RNA polymerase beta' chain family. In terms of assembly, the RNAP catalytic core consists of 2 alpha, 1 beta, 1 beta' and 1 omega subunit. When a sigma factor is associated with the core the holoenzyme is formed, which can initiate transcription. Mg(2+) is required as a cofactor. It depends on Zn(2+) as a cofactor.

It catalyses the reaction RNA(n) + a ribonucleoside 5'-triphosphate = RNA(n+1) + diphosphate. Its function is as follows. DNA-dependent RNA polymerase catalyzes the transcription of DNA into RNA using the four ribonucleoside triphosphates as substrates. This is DNA-directed RNA polymerase subunit beta' from Pseudomonas savastanoi pv. phaseolicola (strain 1448A / Race 6) (Pseudomonas syringae pv. phaseolicola (strain 1448A / Race 6)).